Consider the following 197-residue polypeptide: Large ribosomal subunit protein bL17 (197 aa).

The interval D120–T197 is disordered. Residues G127–R136 show a composition bias toward gly residues. A compositionally biased stretch (acidic residues) spans S159–T197.

It belongs to the bacterial ribosomal protein bL17 family. In terms of assembly, part of the 50S ribosomal subunit. Contacts protein L32.

This is Large ribosomal subunit protein bL17 from Salinibacter ruber (strain DSM 13855 / M31).